The sequence spans 319 residues: Formimidoylglutamase (319 aa).

Mn(2+)-binding residues include N127, D150, H152, D154, D242, and D244.

It belongs to the arginase family. Requires Mn(2+) as cofactor.

The enzyme catalyses N-formimidoyl-L-glutamate + H2O = formamide + L-glutamate. The protein operates within amino-acid degradation; L-histidine degradation into L-glutamate; L-glutamate from N-formimidoyl-L-glutamate (hydrolase route): step 1/1. Catalyzes the conversion of N-formimidoyl-L-glutamate to L-glutamate and formamide. The protein is Formimidoylglutamase of Bacillus subtilis (strain 168).